A 1524-amino-acid chain; its full sequence is DNA-directed RNA polymerase subunit beta' (1524 aa).

Residues C58, C60, C73, and C76 each coordinate Zn(2+). The Mg(2+) site is built by D739, D741, and D743. Positions 1112, 1194, 1201, and 1204 each coordinate Zn(2+). Residues 1501 to 1524 form a disordered region; that stretch reads EAVEAKERPAARRGVKREQPGKQA.

This sequence belongs to the RNA polymerase beta' chain family. In terms of assembly, the RNAP catalytic core consists of 2 alpha, 1 beta, 1 beta' and 1 omega subunit. When a sigma factor is associated with the core the holoenzyme is formed, which can initiate transcription. Mg(2+) serves as cofactor. Zn(2+) is required as a cofactor.

It carries out the reaction RNA(n) + a ribonucleoside 5'-triphosphate = RNA(n+1) + diphosphate. DNA-dependent RNA polymerase catalyzes the transcription of DNA into RNA using the four ribonucleoside triphosphates as substrates. This chain is DNA-directed RNA polymerase subunit beta', found in Thermus thermophilus (strain ATCC BAA-163 / DSM 7039 / HB27).